The sequence spans 333 residues: UDP-N-acetylglucosamine--N-acetylmuramyl-(pentapeptide) pyrophosphoryl-undecaprenol N-acetylglucosamine transferase (333 aa).

UDP-N-acetyl-alpha-D-glucosamine-binding positions include 10-12 (TGG), Asn124, Ser177, and Gln275.

The protein belongs to the glycosyltransferase 28 family. MurG subfamily.

It localises to the cell inner membrane. It catalyses the reaction di-trans,octa-cis-undecaprenyl diphospho-N-acetyl-alpha-D-muramoyl-L-alanyl-D-glutamyl-meso-2,6-diaminopimeloyl-D-alanyl-D-alanine + UDP-N-acetyl-alpha-D-glucosamine = di-trans,octa-cis-undecaprenyl diphospho-[N-acetyl-alpha-D-glucosaminyl-(1-&gt;4)]-N-acetyl-alpha-D-muramoyl-L-alanyl-D-glutamyl-meso-2,6-diaminopimeloyl-D-alanyl-D-alanine + UDP + H(+). It participates in cell wall biogenesis; peptidoglycan biosynthesis. In terms of biological role, cell wall formation. Catalyzes the transfer of a GlcNAc subunit on undecaprenyl-pyrophosphoryl-MurNAc-pentapeptide (lipid intermediate I) to form undecaprenyl-pyrophosphoryl-MurNAc-(pentapeptide)GlcNAc (lipid intermediate II). The sequence is that of UDP-N-acetylglucosamine--N-acetylmuramyl-(pentapeptide) pyrophosphoryl-undecaprenol N-acetylglucosamine transferase from Nitratiruptor sp. (strain SB155-2).